The chain runs to 218 residues: Suppressor of silencing P0 (218 aa).

Residues leucine 63–leucine 67 form the F-box-like domain.

Belongs to the polerovirus P0 protein family. As to quaternary structure, interacts (via F-box-like domain) with host AGO1; this interaction targets AGO1 for degradation, and thereby suppresses the silencing function of the latter. Interacts (via F-box-like domain) with host ASK1 and ASK2 (SKP proteins); these interactions are essential for viral pathogenicity. Part of a SCF P0 complex composed of P0 and the host proteins SKP and CUL1.

Its function is as follows. Suppressor of RNA-mediated gene silencing, also known as post-transcriptional gene silencing (PTGS), a mechanism of plant viral defense that limits the accumulation of viral RNAs. The P0 protein suppresses local PTGS using its F-box-like domain to mediate destabilization and degradation of the AGO1 protein. The polypeptide is Suppressor of silencing P0 (Beet western yellows virus (isolate GB1) (BWYV)).